Consider the following 195-residue polypeptide: Imidazoleglycerol-phosphate dehydratase (195 aa).

The protein belongs to the imidazoleglycerol-phosphate dehydratase family.

It is found in the cytoplasm. It carries out the reaction D-erythro-1-(imidazol-4-yl)glycerol 3-phosphate = 3-(imidazol-4-yl)-2-oxopropyl phosphate + H2O. It functions in the pathway amino-acid biosynthesis; L-histidine biosynthesis; L-histidine from 5-phospho-alpha-D-ribose 1-diphosphate: step 6/9. The chain is Imidazoleglycerol-phosphate dehydratase from Ruegeria sp. (strain TM1040) (Silicibacter sp.).